Here is a 368-residue protein sequence, read N- to C-terminus: DNA replication and repair protein RecF (368 aa).

30–37 (GKNGSGKT) contacts ATP.

Belongs to the RecF family.

It is found in the cytoplasm. The RecF protein is involved in DNA metabolism; it is required for DNA replication and normal SOS inducibility. RecF binds preferentially to single-stranded, linear DNA. It also seems to bind ATP. This is DNA replication and repair protein RecF from Marinomonas sp. (strain MWYL1).